A 146-amino-acid polypeptide reads, in one-letter code: Coactosin (146 aa).

Residues 1 to 132 (MADVSSTELK…NEEELMTKVR (132 aa)) form the ADF-H domain.

It belongs to the actin-binding proteins ADF family. Coactosin subfamily. Post-translationally, the N-terminus is blocked.

The protein localises to the cytoplasm. Its subcellular location is the cytoskeleton. Functionally, binds to F-actin in a calcium independent manner. Binds to the filaments along their length. The protein is Coactosin (coaA) of Dictyostelium discoideum (Social amoeba).